A 175-amino-acid chain; its full sequence is Protein tyrosine phosphatase PRL-1 (175 aa).

One can recognise a Tyrosine-protein phosphatase domain in the interval 15-172 (KPSRVLFHFL…YKRRHQGAGC (158 aa)). Cysteines 53 and 114 form a disulfide. D76 (proton donor) is an active-site residue. C114 acts as the Phosphocysteine intermediate in catalysis. Residue 116-120 (AGLGR) coordinates substrate. Position 172 is a cysteine methyl ester (C172). C172 carries the S-farnesyl cysteine lipid modification. A propeptide spans 173–175 (VIM) (removed in mature form).

The protein belongs to the protein-tyrosine phosphatase family.

It localises to the cytoplasm. The protein resides in the mitochondrion matrix. Its subcellular location is the kinetoplast. It is found in the secreted. The protein localises to the extracellular exosome. It carries out the reaction O-phospho-L-tyrosyl-[protein] + H2O = L-tyrosyl-[protein] + phosphate. Activated in a reduced environment which promotes the reduction of the disulfide bond between the regulatory Cys-53 and catalytic Cys-114 residues. Has protein tyrosine phosphatase activity and may act as a virulence factor to support intracellular survival in host macrophages. The chain is Protein tyrosine phosphatase PRL-1 from Leishmania major.